The primary structure comprises 287 residues: 4-hydroxybenzoate octaprenyltransferase (287 aa).

Transmembrane regions (helical) follow at residues 21 to 41 (VGIF…AKGA), 44 to 64 (FKIA…GCIV), 91 to 111 (VTEA…LVLL), 112 to 132 (LNRL…VYPF), 139 to 159 (LPQL…FAAT), 160 to 180 (VGHV…WPIV), 211 to 231 (LMIG…GWYL), 235 to 255 (YWFY…QFLI), and 263 to 283 (CFAA…GILL).

The protein belongs to the UbiA prenyltransferase family. Mg(2+) is required as a cofactor.

It localises to the cell inner membrane. It catalyses the reaction all-trans-octaprenyl diphosphate + 4-hydroxybenzoate = 4-hydroxy-3-(all-trans-octaprenyl)benzoate + diphosphate. Its pathway is cofactor biosynthesis; ubiquinone biosynthesis. Functionally, catalyzes the prenylation of para-hydroxybenzoate (PHB) with an all-trans polyprenyl group. Mediates the second step in the final reaction sequence of ubiquinone-8 (UQ-8) biosynthesis, which is the condensation of the polyisoprenoid side chain with PHB, generating the first membrane-bound Q intermediate 3-octaprenyl-4-hydroxybenzoate. The chain is 4-hydroxybenzoate octaprenyltransferase from Coxiella burnetii (strain CbuK_Q154) (Coxiella burnetii (strain Q154)).